Here is an 858-residue protein sequence, read N- to C-terminus: GDP-fucose protein O-fucosyltransferase 2 (858 aa).

The Cytoplasmic portion of the chain corresponds to 1–150 (MHCQLGGQAR…RPPCLLNHRR (150 aa)). A helical; Signal-anchor for type II membrane protein transmembrane segment spans residues 151 to 171 (LLLGLVSVLTVFLSCLPFTNA). The Lumenal segment spans residues 172–858 (TVSPAALQDV…WPSLDPSSTL (687 aa)). 237 to 241 (GEGFH) contacts GDP-beta-L-fucose. The active-site Proton acceptor is glutamate 238. Residues 448 to 510 (AALTPQERQR…SRSRKEIQEE (63 aa)) form a disordered region. A compositionally biased stretch (basic and acidic residues) spans 486–510 (DGEREKRKPGRRSDTSRSRKEIQEE). Residues 646–648 (HLR) and 787–788 (RF) each bind GDP-beta-L-fucose. The tract at residues 819–858 (TGGQAQGKCFATKSHDPPEGRSRSELRRKYWPSLDPSSTL) is disordered. The segment covering 831–846 (KSHDPPEGRSRSELRR) has biased composition (basic and acidic residues).

This sequence belongs to the glycosyltransferase 68 family.

Its subcellular location is the endoplasmic reticulum membrane. It carries out the reaction L-seryl-[protein] + GDP-beta-L-fucose = 3-O-(alpha-L-fucosyl)-L-seryl-[protein] + GDP + H(+). The catalysed reaction is L-threonyl-[protein] + GDP-beta-L-fucose = 3-O-(alpha-L-fucosyl)-L-threonyl-[protein] + GDP + H(+). The protein operates within protein modification; protein glycosylation. Its function is as follows. Catalyzes the reaction that attaches fucose through an O-glycosidic linkage to a conserved serine or threonine residue in the consensus sequence C1-X-X-S/T-C2 of thrombospondin type I repeats (TSRs) where C1 and C2 are the first and second cysteines of the repeat, respectively. O-fucosylates microneme protein MIC2 and may play a role in its stabilization. Probably by regulating protein O-fucosylation, may play a role in tachyzoite adhesion to and/or invasion of host cells; however, POFUT2 involvement in adhesion/invasion is controversial. This Toxoplasma gondii (strain ATCC 50853 / GT1) protein is GDP-fucose protein O-fucosyltransferase 2.